A 209-amino-acid polypeptide reads, in one-letter code: Octanoyltransferase (209 aa).

A BPL/LPL catalytic domain is found at 30–209 (DNEPEIVYLV…IQTEFNKIFK (180 aa)). Substrate contacts are provided by residues 69-76 (RGGKFTFH), 143-145 (AIG), and 156-158 (GVA). C174 serves as the catalytic Acyl-thioester intermediate.

Belongs to the LipB family.

The protein resides in the cytoplasm. It catalyses the reaction octanoyl-[ACP] + L-lysyl-[protein] = N(6)-octanoyl-L-lysyl-[protein] + holo-[ACP] + H(+). It participates in protein modification; protein lipoylation via endogenous pathway; protein N(6)-(lipoyl)lysine from octanoyl-[acyl-carrier-protein]: step 1/2. In terms of biological role, catalyzes the transfer of endogenously produced octanoic acid from octanoyl-acyl-carrier-protein onto the lipoyl domains of lipoate-dependent enzymes. Lipoyl-ACP can also act as a substrate although octanoyl-ACP is likely to be the physiological substrate. This chain is Octanoyltransferase, found in Rickettsia felis (strain ATCC VR-1525 / URRWXCal2) (Rickettsia azadi).